A 123-amino-acid polypeptide reads, in one-letter code: Small ribosomal subunit protein uS12c (123 aa).

Positions 103–123 (AAGVKNRKQSRSKYGAKKPKE) are disordered. Residues 107–123 (KNRKQSRSKYGAKKPKE) show a composition bias toward basic residues.

The protein belongs to the universal ribosomal protein uS12 family. Part of the 30S ribosomal subunit.

The protein resides in the plastid. It is found in the chloroplast. Its function is as follows. With S4 and S5 plays an important role in translational accuracy. Located at the interface of the 30S and 50S subunits. The sequence is that of Small ribosomal subunit protein uS12c (rps12) from Guillardia theta (Cryptophyte).